The following is a 298-amino-acid chain: MTEPGASPEDPWVKASPVGAHAGEGRAGRARARRGAGRRGASLLSPKSPTLSVPRGCREDSSHPACAKVEYAYSDNSLDPGLFVESTRKGSVVSRANSIGSTSASSVPNTDDEDSDYHQEAYKESYKDRRRRAHTQAEQKRRDAIKRGYDDLQTIVPTCQQQDFSIGSQKLSKAIVLQKTIDYIQFLHKEKKKQEEEVSTLRKDVTALKIMKVNYEQIVKAHQDNPHEGEDQVSDQVKFNVFQGIMDSLFQSFNASISVASFQELSACVFSWIEEHCKPQTLREIVIGVLHQLKNQLY.

The tract at residues 1–63 (MTEPGASPED…PRGCREDSSH (63 aa)) is disordered. Phosphoserine is present on Ser7. The span at 28-37 (GRARARRGAG) shows a compositional bias: basic residues. Ser45, Ser48, Ser74, Ser77, and Ser98 each carry phosphoserine. A disordered region spans residues 91-145 (SVVSRANSIGSTSASSVPNTDDEDSDYHQEAYKESYKDRRRRAHTQAEQKRRDAI). Residues 94–109 (SRANSIGSTSASSVPN) show a composition bias toward polar residues. 2 stretches are compositionally biased toward basic and acidic residues: residues 116 to 127 (DYHQEAYKESYK) and 135 to 145 (TQAEQKRRDAI). A bHLH domain is found at 129–187 (RRRRAHTQAEQKRRDAIKRGYDDLQTIVPTCQQQDFSIGSQKLSKAIVLQKTIDYIQFL). The tract at residues 140 to 160 (KRRDAIKRGYDDLQTIVPTCQ) is leucine-zipper.

In terms of assembly, efficient DNA binding requires dimerization with another bHLH protein. Binds DNA as a heterodimer with MAD1, MAD4, MNT, WBSCR14 and MLXIP. Can also bind DNA as a homodimer. As to expression, expressed in all tissues tested, including spleen, thymus, prostate, ovary, intestine, colon, peripheral blood leukocyte, heart, liver, skeletal muscle and kidney. Lower levels of expression in testis, brain, placenta and lung.

The protein resides in the cytoplasm. It is found in the nucleus. Its function is as follows. Transcription regulator. Forms a sequence-specific DNA-binding protein complex with MAD1, MAD4, MNT, WBSCR14 and MLXIP which recognizes the core sequence 5'-CACGTG-3'. The TCFL4-MAD1, TCFL4-MAD4, TCFL4-WBSCR14 complexes are transcriptional repressors. Plays a role in transcriptional activation of glycolytic target genes. Involved in glucose-responsive gene regulation. This Homo sapiens (Human) protein is Max-like protein X (MLX).